The sequence spans 64 residues: Transcription factor P13 (64 aa).

Transcription factor that regulates expression of phage structural components with protein P14. This is Transcription factor P13 from Pseudoalteromonas phage PM2 (Bacteriophage PM2).